Here is a 185-residue protein sequence, read N- to C-terminus: Peptide deformylase (185 aa).

Fe cation-binding residues include Cys109 and His152. The active site involves Glu153. A Fe cation-binding site is contributed by His156.

It belongs to the polypeptide deformylase family. It depends on Fe(2+) as a cofactor.

The catalysed reaction is N-terminal N-formyl-L-methionyl-[peptide] + H2O = N-terminal L-methionyl-[peptide] + formate. Its function is as follows. Removes the formyl group from the N-terminal Met of newly synthesized proteins. Requires at least a dipeptide for an efficient rate of reaction. N-terminal L-methionine is a prerequisite for activity but the enzyme has broad specificity at other positions. This chain is Peptide deformylase, found in Roseiflexus castenholzii (strain DSM 13941 / HLO8).